The sequence spans 417 residues: MLLSVPLLLGLLGLAAAEPAVYFKEQFLDGDGWTSRWIESKHKSDFGKFVLSSGKFYGDEEKDKGLQTSQDARFYALSASFEPFSNKGQTLVVQFTVKHEQNIDCGGGYVKLFPNSLDQTDMHGDSEYNIMFGPDICGPGTKKVHVIFNYKGKNVLINKDIRCKDDEFTHLYTLIVRPDNTYEVKIDNSQVESGSLEDDWDFLPPKKIKDPDASKPEDWDERAKIDDPTDSKPEDWDKPEHIPDPDAKKPEDWDEEMDGEWEPPVIQNPEYKGEWKPRQIDNPDYKGTWIHPEIDNPEYSPDPSIYAYDNFGVLGLDLWQVKSGTIFDNFLITNDEAYAEEFGNETWGVTKAAEKQMKDKQDEEQRLKEEEEDKKRKEEEEAEDKEDDEDKDEDEEDEEDKEEDEEEDVPGQAKDEL.

The N-terminal stretch at Met1 to Ala17 is a signal peptide. The interval Glu18–Glu197 is N-domain. Gln26 serves as a coordination point for Ca(2+). Lys48 is subject to N6-acetyllysine. Ca(2+) contacts are provided by Lys62 and Lys64. A disulfide bridge links Cys105 with Cys137. Residues Tyr109, Lys111, Tyr128, and Asp135 each contribute to the an alpha-D-glucoside site. Residue Lys159 is modified to N6-acetyllysine. A 1-1 repeat occupies Val191–Phe202. Residues Val191–Glu255 are 4 X approximate repeats. Positions Ser193–Arg278 are disordered. A P-domain region spans residues Asp198–Tyr308. The span at Lys207–Glu251 shows a compositional bias: basic and acidic residues. Residue Lys209 is modified to N6-acetyllysine. 6 tandem repeats follow at residues Asp210 to Glu221, Asp227 to Lys238, Asp244 to Glu255, Gly259 to Pro269, Gly273 to Pro283, and Gly287 to Pro297. The tract at residues Asp237–Glu270 is interaction with PPIB. Positions Asp252–Trp261 are enriched in acidic residues. The interval Gly259–Pro297 is 3 X approximate repeats. The segment at Asp309–Leu417 is C-domain. Asp317 contacts an alpha-D-glucoside. Asp328 is a Ca(2+) binding site. Residues Thr350–Leu417 form a disordered region. Residues Ala352–Glu379 are compositionally biased toward basic and acidic residues. Over residues Glu380–Val409 the composition is skewed to acidic residues. A Prevents secretion from ER motif is present at residues Lys414–Leu417.

It belongs to the calreticulin family. Monomer. Component of an EIF2 complex at least composed of CELF1/CUGBP1, CALR, CALR3, EIF2S1, EIF2S2, HSP90B1 and HSPA5. Interacts with PDIA3/ERp57 and SPACA9. Interacts with TRIM21. Interacts with NR3C1. Interacts with PPIB. Interacts (via P-domain) with PDIA5. Interacts with GABARAP. Interacts with CLCC1.

It is found in the endoplasmic reticulum lumen. Its subcellular location is the cytoplasm. The protein localises to the cytosol. It localises to the secreted. The protein resides in the extracellular space. It is found in the extracellular matrix. Its subcellular location is the cell surface. The protein localises to the sarcoplasmic reticulum lumen. It localises to the cytoplasmic vesicle. The protein resides in the secretory vesicle. It is found in the cortical granule. Its subcellular location is the cytoplasmic granule. In terms of biological role, calcium-binding chaperone that promotes folding, oligomeric assembly and quality control in the endoplasmic reticulum (ER) via the calreticulin/calnexin cycle. This lectin interacts transiently with almost all of the monoglucosylated glycoproteins that are synthesized in the ER. Interacts with the DNA-binding domain of NR3C1 and mediates its nuclear export. Involved in maternal gene expression regulation. May participate in oocyte maturation via the regulation of calcium homeostasis. This chain is Calreticulin (CALR), found in Chlorocebus aethiops (Green monkey).